The primary structure comprises 188 residues: MGIDISHKHDRVARRTAPKSENPYLRLLSKLYAFLARRTGEKFNAIVLKRLRMSRRNRQPLSLAKVARVVKQAGNEKKTVVTLSTVTDDARLYEVPKISLAALHVTEGARARILAAGGEIITLDQLALRSPKGENTVFLQGPRSAREAEKHFGPAPGVPHSHTKPHVRSKGRKFERARGRRASRAYKN.

Positions 143-188 are disordered; the sequence is RSAREAEKHFGPAPGVPHSHTKPHVRSKGRKFERARGRRASRAYKN. Basic residues-rich tracts occupy residues 161–171 and 178–188; these read SHTKPHVRSKG and RGRRASRAYKN.

It belongs to the eukaryotic ribosomal protein eL18 family.

The protein localises to the cytoplasm. This chain is Large ribosomal subunit protein eL18 (rpl-18), found in Caenorhabditis briggsae.